The primary structure comprises 87 residues: U3-theraphotoxin-Hhn1c (87 aa).

An N-terminal signal peptide occupies residues 1-24; that stretch reads MVNMKASMFLTFAGLVLLFVVCHA. Residues 25–52 constitute a propeptide that is removed on maturation; it reads SESEEKEFPKEMLSSIFAVDDDFKQEER. 3 disulfide bridges follow: cysteine 54–cysteine 67, cysteine 61–cysteine 72, and cysteine 66–cysteine 79.

Belongs to the neurotoxin 10 (Hwtx-1) family. 51 (Hntx-8) subfamily. Hntx-8 sub-subfamily. As to expression, expressed by the venom gland.

It is found in the secreted. Ion channel inhibitor. The sequence is that of U3-theraphotoxin-Hhn1c from Cyriopagopus hainanus (Chinese bird spider).